We begin with the raw amino-acid sequence, 159 residues long: Small ribosomal subunit protein uS17y (159 aa).

This sequence belongs to the universal ribosomal protein uS17 family.

The protein localises to the cytoplasm. This Arabidopsis thaliana (Mouse-ear cress) protein is Small ribosomal subunit protein uS17y (RPS11B).